A 254-amino-acid chain; its full sequence is Sensory rhodopsin (254 aa).

Over 1 to 4 (MTGA) the chain is Extracellular. Residues 5–26 (VTSAYWLAAVAFLIGVGITAAL) form a helical membrane-spanning segment. Residues 27–35 (YAKLEGSRA) are Cytoplasmic-facing. A helical membrane pass occupies residues 36–57 (RTRLAALAVIPGFAGLSYVGMA). Residues 58–71 (LGIGTVTVNGAELV) are Extracellular-facing. A helical membrane pass occupies residues 72-93 (GLRYVDWVVTTPLLVGFIGYNA). At 94-96 (GAS) the chain is on the cytoplasmic side. A helical membrane pass occupies residues 97-119 (RRAIAGVMIADALMIVFGAAAVV). Residues 120–123 (SGGT) lie on the Extracellular side of the membrane. The helical transmembrane segment at 124–151 (LKWALFGVSALFHVSLFAYLYVIFPGGI) threads the bilayer. Residues 152-154 (PDD) are Cytoplasmic-facing. A helical membrane pass occupies residues 155 to 182 (PMQRGLFSLLKNHVGLLWLAYPFVWLMG). Topologically, residues 183–190 (PAGIGFTG) are extracellular. A helical membrane pass occupies residues 191 to 223 (AVGAALTYAFLDVLAKVPYVYFFYARRQAFIDV). Lysine 206 carries the post-translational modification N6-(retinylidene)lysine. Over 224-254 (TDSRAAAKGDGPAVGGEAPVATGDDAPTAAD) the chain is Cytoplasmic. The segment at 231 to 254 (KGDGPAVGGEAPVATGDDAPTAAD) is disordered.

This sequence belongs to the archaeal/bacterial/fungal opsin family.

The protein resides in the cell membrane. Functionally, involved in the control of phototaxis. The polypeptide is Sensory rhodopsin (sop) (Halorubrum sodomense).